Consider the following 407-residue polypeptide: Putative polysaccharide ligase RF_0568 (407 aa).

A run of 10 helical transmembrane segments spans residues 15 to 35, 71 to 91, 100 to 120, 129 to 149, 166 to 186, 203 to 223, 229 to 249, 272 to 292, 324 to 344, and 379 to 399; these read LGMV…LMLF, MTIK…LFAI, FIQV…VPFG, LILG…SHGF, GCAL…SSGK, ISDS…FILA, IFFK…PVIA, LFIW…GYGF, ILQI…CLVY, and IWQI…KLLV.

Belongs to the O-antigen ligase family.

The protein resides in the membrane. The polypeptide is Putative polysaccharide ligase RF_0568 (Rickettsia felis (strain ATCC VR-1525 / URRWXCal2) (Rickettsia azadi)).